The primary structure comprises 280 residues: Large ribosomal subunit protein uL2 (280 aa).

2 disordered regions span residues 27–58 and 226–280; these read STPE…GGGH and MNPV…KHGR. Composition is skewed to basic residues over residues 37 to 58 and 268 to 280; these read LHGH…GGGH and IVRR…KHGR.

The protein belongs to the universal ribosomal protein uL2 family. In terms of assembly, part of the 50S ribosomal subunit. Forms a bridge to the 30S subunit in the 70S ribosome.

Functionally, one of the primary rRNA binding proteins. Required for association of the 30S and 50S subunits to form the 70S ribosome, for tRNA binding and peptide bond formation. It has been suggested to have peptidyltransferase activity; this is somewhat controversial. Makes several contacts with the 16S rRNA in the 70S ribosome. The protein is Large ribosomal subunit protein uL2 of Mycobacterium ulcerans (strain Agy99).